A 423-amino-acid polypeptide reads, in one-letter code: Histidinol dehydrogenase (423 aa).

Residues Tyr116, Gln177, and Asn200 each contribute to the NAD(+) site. Substrate contacts are provided by Ser223, Gln245, and His248. 2 residues coordinate Zn(2+): Gln245 and His248. Active-site proton acceptor residues include Glu313 and His314. The substrate site is built by His314, Asp347, Glu401, and His406. Residue Asp347 coordinates Zn(2+). A Zn(2+)-binding site is contributed by His406.

This sequence belongs to the histidinol dehydrogenase family. It depends on Zn(2+) as a cofactor.

The enzyme catalyses L-histidinol + 2 NAD(+) + H2O = L-histidine + 2 NADH + 3 H(+). It functions in the pathway amino-acid biosynthesis; L-histidine biosynthesis; L-histidine from 5-phospho-alpha-D-ribose 1-diphosphate: step 9/9. Catalyzes the sequential NAD-dependent oxidations of L-histidinol to L-histidinaldehyde and then to L-histidine. In Staphylococcus saprophyticus subsp. saprophyticus (strain ATCC 15305 / DSM 20229 / NCIMB 8711 / NCTC 7292 / S-41), this protein is Histidinol dehydrogenase.